Consider the following 638-residue polypeptide: Pentatricopeptide repeat-containing protein At1g59720, chloroplastic/mitochondrial (638 aa).

A chloroplast and mitochondrion-targeting transit peptide spans 1–40; the sequence is MVVRSIIVSPPTTITYYHPMSIGLLVHPLSPHIPPASSPS. PPR repeat units follow at residues 82 to 112, 113 to 148, 150 to 184, 185 to 215, 216 to 246, 250 to 280, 288 to 318, 319 to 353, 356 to 390, and 392 to 422; these read TLFL…IENH, SSFM…GESS, DKHT…GFGG, DVYV…MPER, SLVS…MQRS, DGYT…LLRK, DVLV…MQKR, DLAS…RENV, NSVT…YCIE, and ALEH…MPMK. The segment at 427 to 510 is type E motif; it reads IWRSLLDACC…EPGCSSIEIN (84 aa). Residues 511-541 form a type E(+) motif region; the sequence is GISHEFFAGDTSHPQTKQIYQQLKVIDDRLR. The interval 542–638 is type DYW motif; it reads SIGYLPDRSQ…DGSCSCLDYW (97 aa).

Belongs to the PPR family. PCMP-H subfamily. Interacts with ORRM1. Interacts with VAR3/OZ1.

The protein resides in the plastid. It is found in the chloroplast. It localises to the mitochondrion. In terms of biological role, involved in multiple sites RNA editing events in chloroplasts. Involved in the editing of the site 2 of ndhB (ndhB-2) and site 3 of ndhD (ndhD-3) transcripts, which are two plastid-encoded subunits of the chloroplast NAD(P)H dehydrogenase (NDH) complex. Required for the activity of the NDH complex of the photosynthetic electron transport chain. The protein is Pentatricopeptide repeat-containing protein At1g59720, chloroplastic/mitochondrial (PCMP-H51) of Arabidopsis thaliana (Mouse-ear cress).